We begin with the raw amino-acid sequence, 910 residues long: Harmonin (910 aa).

Positions 1–86 (MDRKVAREFR…LTPRRSRKLK (86 aa)) are N-terminal domain. PDZ domains follow at residues 87–171 (EVRL…GLIP) and 211–295 (KVFI…AGRE). The interval 194 to 833 (GVRGGLGSPG…KAWNQGGDWI (640 aa)) is mediates interaction with MYO7B. At Ser-219 the chain carries Phosphoserine. Coiled coils occupy residues 299-377 (TDRE…WEED) and 417-482 (TIRK…DLEE). The segment at 563–688 (VMPHPPSVNS…PPRGPGVSTI (126 aa)) is disordered. Pro residues predominate over residues 564–582 (MPHPPSVNSPSKVPAPPVL). The segment covering 583-596 (PSSGHVSSSSSPWV) has biased composition (low complexity). Over residues 599-611 (TPPPIPIPPPPSI) the composition is skewed to pro residues. The span at 650–664 (NTHSGKPSSSPTTER) shows a compositional bias: polar residues. In terms of domain architecture, PDZ 3 spans 752–839 (DVRLLRIKKE…GDWIDLVVAV (88 aa)). A disordered region spans residues 890 to 910 (KSRERNQTDPSWRPASSAPSP). Residues 899 to 910 (PSWRPASSAPSP) show a composition bias toward low complexity.

Part of the IMAC/intermicrovillar adhesion complex/intermicrovillar tip-link complex composed of ANKS4B, MYO7B, USH1C, CDHR2 and CDHR5. Part of a complex composed of USH1C, USH1G and MYO7A. Interacts with F-actin. Interacts with USH2A. Interacts with SLC4A7. Interacts (via PDZ1 domain) with the C-terminus of USHBP1. Interacts (via N-terminus and PDZ 2 domain) with CDH23. Interacts with USH1G. Interacts with MYO7B. Interacts with CDHR2 and CDHR5; may mediate their interaction with MYO7B at the microvilli tip. Interacts (via PDZ 1 domain) with ANKS4B. Interacts (via PDZ 1 domain) with DOCK4. As to expression, detected in stereocilia of cochlear hair cells (at protein level). Isoform 1 is expressed in the eye, cochlea, vestibule, heart, kidney, small intestine and testis; it is barely visible in skeletal muscle, liver, and lung and is absent from the brain. Isoforms 2 and 3 are expressed in the cochlea and vestibule.

It is found in the cytoplasm. It localises to the cytosol. The protein localises to the cytoskeleton. The protein resides in the cell projection. Its subcellular location is the microvillus. Its function is as follows. Anchoring/scaffolding protein that is a part of the functional network formed by USH1C, USH1G, CDH23 and MYO7A that mediates mechanotransduction in cochlear hair cells. Required for normal development and maintenance of cochlear hair cell bundles. As part of the intermicrovillar adhesion complex/IMAC plays a role in brush border differentiation, controlling microvilli organization and length. Probably plays a central regulatory role in the assembly of the complex, recruiting CDHR2, CDHR5 and MYO7B to the microvilli tips. This chain is Harmonin (Ush1c), found in Mus musculus (Mouse).